A 63-amino-acid polypeptide reads, in one-letter code: Large ribosomal subunit protein uL30 (63 aa).

Belongs to the universal ribosomal protein uL30 family. As to quaternary structure, part of the 50S ribosomal subunit.

The sequence is that of Large ribosomal subunit protein uL30 from Coxiella burnetii (strain CbuK_Q154) (Coxiella burnetii (strain Q154)).